The sequence spans 455 residues: UDP-glycosyltransferase 2 (455 aa).

The protein belongs to the UDP-glycosyltransferase family.

It catalyses the reaction exophillate + UDP-alpha-D-galactose = phaeomoniecin D + UDP + H(+). It functions in the pathway secondary metabolite biosynthesis. Functionally, catalyzes the second glycosylation step during phaeomoniecin D biosynthesis, the further O-galactosylation of exophillic acid (produced by the O-glycosyltransferase OGT1) to yield the 4-O-beta-D-galactoside phaeomoniecin D. This is UDP-glycosyltransferase 2 from Phaeomoniella chlamydospora (Phaeoacremonium chlamydosporum).